We begin with the raw amino-acid sequence, 420 residues long: UDP-N-acetyl-D-mannosamine dehydrogenase (420 aa).

The NAD(+) site is built by tyrosine 13, isoleucine 14, aspartate 33, threonine 85, and threonine 126. UDP-N-acetyl-alpha-D-mannosaminouronate contacts are provided by arginine 160, valine 161, lysine 212, asparagine 216, arginine 219, histidine 250, arginine 252, and glycine 263. Lysine 212 (proton donor/acceptor) is an active-site residue. Catalysis depends on cysteine 266, which acts as the Nucleophile. Positions 330 and 331 each coordinate UDP-N-acetyl-alpha-D-mannosaminouronate. NAD(+) is bound at residue arginine 338. Lysine 416 serves as a coordination point for UDP-N-acetyl-alpha-D-mannosaminouronate.

It belongs to the UDP-glucose/GDP-mannose dehydrogenase family. WecC subfamily. As to quaternary structure, homodimer.

It carries out the reaction UDP-N-acetyl-alpha-D-mannosamine + 2 NAD(+) + H2O = UDP-N-acetyl-alpha-D-mannosaminouronate + 2 NADH + 3 H(+). The protein operates within bacterial outer membrane biogenesis; enterobacterial common antigen biosynthesis. Its function is as follows. Catalyzes the four-electron oxidation of UDP-N-acetyl-D-mannosamine (UDP-ManNAc), reducing NAD(+) and releasing UDP-N-acetylmannosaminuronic acid (UDP-ManNAcA). The chain is UDP-N-acetyl-D-mannosamine dehydrogenase from Salmonella typhi.